The sequence spans 792 residues: Phenylalanine--tRNA ligase beta subunit (792 aa).

The tRNA-binding domain occupies Gly-39–Ala-147. In terms of domain architecture, B5 spans Pro-400–Thr-475. Asp-453, Asp-459, Glu-462, and Glu-463 together coordinate Mg(2+). Positions Ser-698–Arg-791 constitute an FDX-ACB domain.

It belongs to the phenylalanyl-tRNA synthetase beta subunit family. Type 1 subfamily. Tetramer of two alpha and two beta subunits. It depends on Mg(2+) as a cofactor.

The protein resides in the cytoplasm. It carries out the reaction tRNA(Phe) + L-phenylalanine + ATP = L-phenylalanyl-tRNA(Phe) + AMP + diphosphate + H(+). The polypeptide is Phenylalanine--tRNA ligase beta subunit (Xylella fastidiosa (strain Temecula1 / ATCC 700964)).